The sequence spans 365 residues: Putative nudix hydrolase 1 (365 aa).

Residues 72–201 form the Nudix hydrolase domain; it reads VNYVAAAIIL…DFIRLVDEAV (130 aa). The Nudix box signature appears at 109–130; sequence GRVEAGETIEEAVVREVKEETG. Mg(2+) is bound by residues Glu-124 and Glu-128.

The protein belongs to the Nudix hydrolase family. Mg(2+) serves as cofactor. Requires Mn(2+) as cofactor.

Functionally, probably mediates the hydrolysis of some nucleoside diphosphate derivatives. The polypeptide is Putative nudix hydrolase 1 (ndx-1) (Caenorhabditis elegans).